Here is a 543-residue protein sequence, read N- to C-terminus: Zinc metalloproteinase (543 aa).

Positions 1 to 24 (MHPNYYLSPLAVAIALGIASPVKA) are cleaved as a signal peptide. Positions 25 to 207 (ADPIPLQKSS…PFVQWDDVKT (183 aa)) are excised as a propeptide. H377 is a Zn(2+) binding site. Residue E378 is part of the active site. Residues H381 and E401 each coordinate Zn(2+). H463 functions as the Proton donor in the catalytic mechanism.

It belongs to the peptidase M4 family. Zn(2+) is required as a cofactor.

The protein localises to the secreted. Functionally, cleaves collagen, gelatin, casein, alpha-1-antitrypsin, and bovine insulin. May play a role in the pathogenesis of legionnaires disease. This is Zinc metalloproteinase from Legionella pneumophila.